The sequence spans 182 residues: Ribosome-recycling factor (182 aa).

This sequence belongs to the RRF family.

Its subcellular location is the cytoplasm. Its function is as follows. Responsible for the release of ribosomes from messenger RNA at the termination of protein biosynthesis. May increase the efficiency of translation by recycling ribosomes from one round of translation to another. In Prochlorococcus marinus (strain AS9601), this protein is Ribosome-recycling factor.